A 72-amino-acid chain; its full sequence is UPF0352 protein SO_2176 (72 aa).

The protein belongs to the UPF0352 family.

The protein is UPF0352 protein SO_2176 of Shewanella oneidensis (strain ATCC 700550 / JCM 31522 / CIP 106686 / LMG 19005 / NCIMB 14063 / MR-1).